A 411-amino-acid chain; its full sequence is Carbohydrate sulfotransferase 5 (411 aa).

Residues 1–30 (MGMRARVPKVAHSTRRPPAARMWLPRFSSK) lie on the Cytoplasmic side of the membrane. Residues 31 to 48 (TVTVLLLAQTTCLLLFII) form a helical; Signal-anchor for type II membrane protein membrane-spanning segment. Residues 49–411 (SRPGPSSPAG…PDHFSWASPD (363 aa)) lie on the Lumenal side of the membrane. 71–77 (WRSGSSF) serves as a coordination point for 3'-phosphoadenylyl sulfate. N-linked (GlcNAc...) asparagine glycosylation occurs at asparagine 138. 224–232 (RDPRAVLRS) is a 3'-phosphoadenylyl sulfate binding site. N-linked (GlcNAc...) asparagine glycans are attached at residues asparagine 327 and asparagine 350.

Belongs to the sulfotransferase 1 family. Gal/GlcNAc/GalNAc subfamily. As to expression, predominantly expressed in small and large intestines and colon. Weakly expressed in lymphocytes. Not expressed in other tissues. Down-regulated in colonic adenocarcinomas.

It is found in the golgi apparatus membrane. Functionally, sulfotransferase that utilizes 3'-phospho-5'-adenylyl sulfate (PAPS) as sulfonate donor to catalyze the transfer of sulfate to position 6 of non-reducing N-acetylglucosamine (GlcNAc) residues and O-linked sugars of mucin-type acceptors. Acts on the non-reducing terminal GlcNAc of short carbohydrate substrates. However, it does not transfer sulfate to longer carbohydrate substrates that have poly-N-acetyllactosamine structures. Has no activity toward keratan. Not involved in generating HEV-expressed ligands for SELL. Its substrate specificity may be influenced by its subcellular location. This is Carbohydrate sulfotransferase 5 (CHST5) from Homo sapiens (Human).